A 363-amino-acid polypeptide reads, in one-letter code: MNAKTYEALETMQKRLFQIQKDLEDENILKDIKKFTELNKEKANLEEVVEKFVEYKKAVDHIKDAKAILENEKDSELIELAKIELDENNDKVEHLQQVIEEMLLPKDPNDEKNVIIEIRGAAGGDEANIFAGDLLRMYKLYAETQNWKINILEASLGEAGGYSQVVFMIKGDRVYSKLKFESGAHRVQRVPKTEAKGRIQTSTATVAVLPEMSEVEIEIRSNDLRIDTYRASGAGGQHVNTTDSAVRITHLPTGIVVTSQDGRSQHDNKDIAMTMLRAKVYEAEVEKQQAQADATRKNAVGTGARSEKIRTYNYPQNRVTDHRVGLTLNKLDQVMEGNIDEFIIALINEEQRQKVAEQLKNNE.

An N5-methylglutamine modification is found at Gln237.

This sequence belongs to the prokaryotic/mitochondrial release factor family. Post-translationally, methylated by PrmC. Methylation increases the termination efficiency of RF1.

The protein localises to the cytoplasm. Functionally, peptide chain release factor 1 directs the termination of translation in response to the peptide chain termination codons UAG and UAA. This chain is Peptide chain release factor 1 (prfA), found in Mycoplasma capricolum subsp. capricolum (strain California kid / ATCC 27343 / NCTC 10154).